A 208-amino-acid chain; its full sequence is Probable GTP-binding protein EngB (208 aa).

Positions 22-195 (GLPEIALAGR…WHSIEEIFIA (174 aa)) constitute an EngB-type G domain. GTP contacts are provided by residues 30–37 (GRSNVGKS), 57–61 (GKTRT), 75–78 (DLPG), 142–145 (TKSD), and 174–176 (ISS). Mg(2+)-binding residues include serine 37 and threonine 59.

The protein belongs to the TRAFAC class TrmE-Era-EngA-EngB-Septin-like GTPase superfamily. EngB GTPase family. The cofactor is Mg(2+).

In terms of biological role, necessary for normal cell division and for the maintenance of normal septation. This Alkaliphilus oremlandii (strain OhILAs) (Clostridium oremlandii (strain OhILAs)) protein is Probable GTP-binding protein EngB.